The primary structure comprises 214 residues: Adenylate kinase (214 aa).

10-15 serves as a coordination point for ATP; the sequence is GAGKGT. The interval 30–59 is NMP; the sequence is STGDMLRAAIKAGTELGKQAKSVIDAGQLV. Residues Thr-31, Arg-36, 57–59, 85–88, and Gln-92 contribute to the AMP site; these read QLV and GFPR. The LID stretch occupies residues 122 to 159; that stretch reads GRRAHLASGRTYHNVYNPPKVEGKDDVTGEDLVIREDD. Residues Arg-123 and 132 to 133 each bind ATP; that span reads TY. AMP contacts are provided by Arg-156 and Arg-167. ATP is bound at residue Lys-200.

This sequence belongs to the adenylate kinase family. In terms of assembly, monomer.

The protein resides in the cytoplasm. The catalysed reaction is AMP + ATP = 2 ADP. It functions in the pathway purine metabolism; AMP biosynthesis via salvage pathway; AMP from ADP: step 1/1. Functionally, catalyzes the reversible transfer of the terminal phosphate group between ATP and AMP. Plays an important role in cellular energy homeostasis and in adenine nucleotide metabolism. The sequence is that of Adenylate kinase from Photobacterium profundum (strain SS9).